We begin with the raw amino-acid sequence, 308 residues long: tRNA dimethylallyltransferase (308 aa).

11 to 18 contributes to the ATP binding site; the sequence is GSTATGKS. 13 to 18 contributes to the substrate binding site; it reads TATGKS. Residues 36–39 are interaction with substrate tRNA; the sequence is DSVQ.

It belongs to the IPP transferase family. In terms of assembly, monomer. It depends on Mg(2+) as a cofactor.

The catalysed reaction is adenosine(37) in tRNA + dimethylallyl diphosphate = N(6)-dimethylallyladenosine(37) in tRNA + diphosphate. Its function is as follows. Catalyzes the transfer of a dimethylallyl group onto the adenine at position 37 in tRNAs that read codons beginning with uridine, leading to the formation of N6-(dimethylallyl)adenosine (i(6)A). In Bdellovibrio bacteriovorus (strain ATCC 15356 / DSM 50701 / NCIMB 9529 / HD100), this protein is tRNA dimethylallyltransferase.